Consider the following 210-residue polypeptide: Vacuolar protein sorting-associated protein 28 homolog (210 aa).

Positions 1–106 (MSSQNANLMR…REGRPITVKD (106 aa)) constitute a VPS28 N-terminal domain. The region spanning 110–206 (NVLKHIASIV…AYQAFNKALN (97 aa)) is the VPS28 C-terminal domain.

The protein belongs to the VPS28 family. In terms of assembly, component of the ESCRT-I complex (endosomal sorting complex required for transport I). As to expression, expressed in embryos.

The protein localises to the endosome. Its function is as follows. Component of the ESCRT-I complex, a regulator of vesicular trafficking process. The chain is Vacuolar protein sorting-associated protein 28 homolog (vps-28) from Caenorhabditis elegans.